Here is a 488-residue protein sequence, read N- to C-terminus: Intron-encoded DNA endonuclease I-AniI (488 aa).

A cobA exon 1 encoded region spans residues 1 to 169 (MRILKSHPLL…DIVEFIWGGL (169 aa)). The tract at residues 170 to 488 (YTDEPQCGDV…SEKIKIPSNY (319 aa)) is cobA intron encoded.

This sequence in the C-terminal section; belongs to the LAGLIDADG endonuclease family. In terms of assembly, homodimer. Mg(2+) is required as a cofactor. The mature protein may arise from proteolytic cleavage of an in-frame translation of cobA exon 1 plus intron, containing the I-AniI open reading frame. Cleavage may take place close to Met-213 resulting in an active endonuclease/maturase of about 30 kDa.

The protein localises to the mitochondrion. Functionally, mitochondrial DNA endonuclease and mRNA maturase involved in intron homing and required for splicing of the cytochrome b (cobA) gene intron, containing its own coding sequence. The protein stimulates the intrinsic ribozyme activity of the intron through binding to and stabilizing specific secondary and tertiary structure elements in the RNA. As an endonuclease it introduces a specific double-strand break at the junction of the two exons the cobA gene and thus mediates the insertion of an intron, containing its own coding sequence (group I intron), into an intronless gene. Recognizes with limited specificity and cleaves the sequence 5'-GAGGAGGTTTCTCTGTA-3'. The proteins RNA and DNA recognition and binding surfaces are independent. The sequence is that of Intron-encoded DNA endonuclease I-AniI (I-AniI) from Emericella nidulans (Aspergillus nidulans).